Reading from the N-terminus, the 2754-residue chain is Neurobeachin-like protein 2 (2754 aa).

Disordered regions lie at residues 1298-1338 (TAGS…SEAP) and 1364-1438 (SVGS…QQTS). 2 stretches are compositionally biased toward pro residues: residues 1301-1323 (SPPP…PPTE) and 1388-1400 (TPSP…PFPA). Positions 1425–1437 (GDDTSNTSNPQQT) are enriched in polar residues. The residue at position 1647 (Ser1647) is a Phosphoserine. Residue Thr1867 is modified to Phosphothreonine. Residues 1915 to 2040 (EQREKLVLSA…VRNQVYSWLL (126 aa)) form the BEACH-type PH domain. The region spanning 2053–2345 (RSPQEMLRAS…QLLKEPHPTR (293 aa)) is the BEACH domain. 7 WD repeats span residues 2386–2424 (LVLA…SWLP), 2448–2491 (RLLS…ALPR), 2494–2531 (LLSQ…VWRL), 2544–2582 (KPVQ…IHTV), 2589–2631 (AALR…TYSL), 2639–2674 (KLRA…ILQL), and 2682–2717 (PPLP…VVAG). 2 positions are modified to phosphoserine: Ser2739 and Ser2742.

It belongs to the WD repeat neurobeachin family. Expressed in megakaryocytes.

The protein resides in the endoplasmic reticulum. Functionally, probably involved in thrombopoiesis. Plays a role in the development or secretion of alpha-granules, that contain several growth factors important for platelet biogenesis. The polypeptide is Neurobeachin-like protein 2 (NBEAL2) (Homo sapiens (Human)).